The following is a 339-amino-acid chain: D-erythrose-4-phosphate dehydrogenase (339 aa).

NAD(+) contacts are provided by residues 12-13 and arginine 81; that span reads RI. Substrate is bound by residues 154–156, arginine 200, 213–214, and arginine 236; these read SCT and TR. Residue cysteine 155 is the Nucleophile of the active site. Asparagine 318 serves as a coordination point for NAD(+).

The protein belongs to the glyceraldehyde-3-phosphate dehydrogenase family. Epd subfamily. Homotetramer.

The protein resides in the cytoplasm. It catalyses the reaction D-erythrose 4-phosphate + NAD(+) + H2O = 4-phospho-D-erythronate + NADH + 2 H(+). Its pathway is cofactor biosynthesis; pyridoxine 5'-phosphate biosynthesis; pyridoxine 5'-phosphate from D-erythrose 4-phosphate: step 1/5. Its function is as follows. Catalyzes the NAD-dependent conversion of D-erythrose 4-phosphate to 4-phosphoerythronate. The sequence is that of D-erythrose-4-phosphate dehydrogenase from Cronobacter sakazakii (strain ATCC BAA-894) (Enterobacter sakazakii).